A 235-amino-acid polypeptide reads, in one-letter code: Purine nucleoside phosphorylase DeoD-type (235 aa).

His4 is a binding site for a purine D-ribonucleoside. Phosphate is bound by residues Gly20, Arg24, Arg43, and 87–90 (RVGT). A purine D-ribonucleoside-binding positions include 179-181 (EME) and 203-204 (SD). Asp204 acts as the Proton donor in catalysis.

It belongs to the PNP/UDP phosphorylase family. In terms of assembly, homohexamer; trimer of homodimers.

The catalysed reaction is a purine D-ribonucleoside + phosphate = a purine nucleobase + alpha-D-ribose 1-phosphate. It catalyses the reaction a purine 2'-deoxy-D-ribonucleoside + phosphate = a purine nucleobase + 2-deoxy-alpha-D-ribose 1-phosphate. Catalyzes the reversible phosphorolytic breakdown of the N-glycosidic bond in the beta-(deoxy)ribonucleoside molecules, with the formation of the corresponding free purine bases and pentose-1-phosphate. The protein is Purine nucleoside phosphorylase DeoD-type of Clostridium perfringens (strain ATCC 13124 / DSM 756 / JCM 1290 / NCIMB 6125 / NCTC 8237 / Type A).